Reading from the N-terminus, the 31-residue chain is Photosystem II reaction center protein T (31 aa).

The helical transmembrane segment at 3–23 threads the bilayer; that stretch reads AFSYTLLMALAAVTLFFAVAF.

This sequence belongs to the PsbT family. In terms of assembly, PSII is composed of 1 copy each of membrane proteins PsbA, PsbB, PsbC, PsbD, PsbE, PsbF, PsbH, PsbI, PsbJ, PsbK, PsbL, PsbM, PsbT, PsbX, PsbY, Psb30/Ycf12, peripheral proteins PsbO, CyanoQ (PsbQ), PsbU, PsbV and a large number of cofactors. It forms dimeric complexes.

The protein localises to the cellular thylakoid membrane. Found at the monomer-monomer interface of the photosystem II (PS II) dimer, plays a role in assembly and dimerization of PSII. PSII is a light-driven water plastoquinone oxidoreductase, using light energy to abstract electrons from H(2)O, generating a proton gradient subsequently used for ATP formation. The protein is Photosystem II reaction center protein T of Prochlorococcus marinus (strain MIT 9211).